The chain runs to 652 residues: DNA ligase (652 aa).

Residues Asp30–Asp34, Ser79–Leu80, and Glu108 contribute to the NAD(+) site. The N6-AMP-lysine intermediate role is filled by Lys110. Residues Arg131, Glu165, Lys280, and Lys304 each contribute to the NAD(+) site. Zn(2+)-binding residues include Cys398, Cys401, Cys414, and Cys419. In terms of domain architecture, BRCT spans Ala574–Ala652.

Belongs to the NAD-dependent DNA ligase family. LigA subfamily. The cofactor is Mg(2+). Mn(2+) serves as cofactor.

The catalysed reaction is NAD(+) + (deoxyribonucleotide)n-3'-hydroxyl + 5'-phospho-(deoxyribonucleotide)m = (deoxyribonucleotide)n+m + AMP + beta-nicotinamide D-nucleotide.. In terms of biological role, DNA ligase that catalyzes the formation of phosphodiester linkages between 5'-phosphoryl and 3'-hydroxyl groups in double-stranded DNA using NAD as a coenzyme and as the energy source for the reaction. It is essential for DNA replication and repair of damaged DNA. This is DNA ligase from Sulfurimonas denitrificans (strain ATCC 33889 / DSM 1251) (Thiomicrospira denitrificans (strain ATCC 33889 / DSM 1251)).